The chain runs to 21 residues: Glucose-1-phosphate adenylyltransferase large subunit (21 aa).

Residues 1-21 are disordered; that stretch reads SVTADNASETKVREIGQEKSS. Over residues 8-21 the composition is skewed to basic and acidic residues; that stretch reads SETKVREIGQEKSS.

It belongs to the bacterial/plant glucose-1-phosphate adenylyltransferase family. In terms of assembly, heterotetramer.

It localises to the plastid. It is found in the chloroplast. The protein resides in the amyloplast. It catalyses the reaction alpha-D-glucose 1-phosphate + ATP + H(+) = ADP-alpha-D-glucose + diphosphate. Its pathway is glycan biosynthesis; starch biosynthesis. With respect to regulation, activated by 3'phosphoglycerate, inhibited by orthophosphate. Allosteric regulation. In terms of biological role, this protein plays a role in synthesis of starch. It catalyzes the synthesis of the activated glycosyl donor, ADP-glucose from Glc-1-P and ATP. The polypeptide is Glucose-1-phosphate adenylyltransferase large subunit (Spinacia oleracea (Spinach)).